A 142-amino-acid polypeptide reads, in one-letter code: Small ribosomal subunit protein bS6 (142 aa).

Residues 110-133 (NKKPSHAKEKHEKTEHTHSHHLEE) are compositionally biased toward basic and acidic residues. A disordered region spans residues 110–142 (NKKPSHAKEKHEKTEHTHSHHLEEAESVGSHSE).

Belongs to the bacterial ribosomal protein bS6 family.

Functionally, binds together with bS18 to 16S ribosomal RNA. This Helicobacter pylori (strain HPAG1) protein is Small ribosomal subunit protein bS6.